A 286-amino-acid chain; its full sequence is MELIIISGRSGSGKSVALRALEDVGYYCVDNLPLPLIPELAGFLSNSGRSAVVSLDIRNIPENPESIEALLEQLSKLTIQTKIIFLDCERNTLIRRYSDTRRLHPLSNKDLSLESAIDLENTLLEPLYQQANYIIDTTNISSHELAENLRGILRGSTDKALKIVFESFGFKYGLPADADYVFDVRFLPNPHWNPELRPMTGLEQPVIDFLERQTEVHNFIYQTRNYLEMWLPMLEKNNRSYLTIAIGCTGGKHRSVFIAEQLAKYFQSRDKDVQIRHRSLEKHHKK.

8-15 (GRSGSGKS) is an ATP binding site. Residue 56-59 (DIRN) coordinates GTP.

It belongs to the RapZ-like family.

In terms of biological role, displays ATPase and GTPase activities. The chain is Nucleotide-binding protein APL_0334 from Actinobacillus pleuropneumoniae serotype 5b (strain L20).